We begin with the raw amino-acid sequence, 528 residues long: Probable methylmalonate-semialdehyde/malonate-semialdehyde dehydrogenase [acylating], mitochondrial (528 aa).

The N-terminal 26 residues, 1-26 (MLSFKFAKSASKVIGNRNFHSSSASL), are a transit peptide targeting the mitochondrion. NAD(+) is bound by residues phenylalanine 175, lysine 199, glutamate 202, and arginine 203. The active-site Nucleophile is cysteine 307. Glutamate 408 contacts NAD(+).

Belongs to the aldehyde dehydrogenase family. In terms of assembly, homotetramer.

It localises to the mitochondrion. It catalyses the reaction 2-methyl-3-oxopropanoate + NAD(+) + CoA + H2O = propanoyl-CoA + hydrogencarbonate + NADH + H(+). The enzyme catalyses 3-oxopropanoate + NAD(+) + CoA + H2O = hydrogencarbonate + acetyl-CoA + NADH + H(+). Its function is as follows. Probable malonate and methylmalonate semialdehyde dehydrogenase involved in the catabolism of valine, thymine, and compounds catabolized by way of beta-alanine, including uracil and cytidine. The polypeptide is Probable methylmalonate-semialdehyde/malonate-semialdehyde dehydrogenase [acylating], mitochondrial (mmsdh) (Dictyostelium discoideum (Social amoeba)).